Here is a 213-residue protein sequence, read N- to C-terminus: Receptor-binding cancer antigen expressed on SiSo cells (213 aa).

The Extracellular portion of the chain corresponds to 1 to 6 (MAITQF). The chain crosses the membrane as a helical; Signal-anchor for type III membrane protein span at residues 7–27 (RLFKVCTCLATVFSFLKRLIC). The Cytoplasmic segment spans residues 28–213 (RSGRGRKLSG…EQNKIGVKLS (186 aa)). S36 carries the phosphoserine modification. Phosphothreonine is present on T41. The residue at position 94 (Y94) is a Phosphotyrosine. Residues 163–211 (EDAAWQAEEVLRQQKIADREKRAAEQQRKRMEKEAQRLMRKEQNKIGVK) adopt a coiled-coil conformation. Residues 179-206 (ADREKRAAEQQRKRMEKEAQRLMRKEQN) are compositionally biased toward basic and acidic residues. Positions 179 to 213 (ADREKRAAEQQRKRMEKEAQRLMRKEQNKIGVKLS) are disordered.

As to quaternary structure, homodimer.

It localises to the golgi apparatus membrane. Its function is as follows. May participate in suppression of cell proliferation and induces apoptotic cell death through activation of interleukin-1-beta converting enzyme (ICE)-like proteases. The sequence is that of Receptor-binding cancer antigen expressed on SiSo cells (EBAG9) from Canis lupus familiaris (Dog).